The following is a 1199-amino-acid chain: DNA-directed RNA polymerase subunit beta' (1199 aa).

Residues cysteine 60, cysteine 62, cysteine 75, and cysteine 78 each coordinate Zn(2+). The Mg(2+) site is built by aspartate 449, aspartate 451, and aspartate 453. Zn(2+)-binding residues include cysteine 818, cysteine 892, cysteine 899, and cysteine 902.

The protein belongs to the RNA polymerase beta' chain family. In terms of assembly, the RNAP catalytic core consists of 2 alpha, 1 beta, 1 beta' and 1 omega subunit. When a sigma factor is associated with the core the holoenzyme is formed, which can initiate transcription. Mg(2+) is required as a cofactor. Zn(2+) serves as cofactor.

The enzyme catalyses RNA(n) + a ribonucleoside 5'-triphosphate = RNA(n+1) + diphosphate. Functionally, DNA-dependent RNA polymerase catalyzes the transcription of DNA into RNA using the four ribonucleoside triphosphates as substrates. This chain is DNA-directed RNA polymerase subunit beta', found in Bacillus licheniformis (strain ATCC 14580 / DSM 13 / JCM 2505 / CCUG 7422 / NBRC 12200 / NCIMB 9375 / NCTC 10341 / NRRL NRS-1264 / Gibson 46).